The sequence spans 488 residues: 3-octaprenyl-4-hydroxybenzoate carboxy-lyase (488 aa).

Asn172 provides a ligand contact to Mn(2+). Residues 175–177 (IYR), 189–191 (RWL), and 194–195 (RG) contribute to the prenylated FMN site. Glu238 provides a ligand contact to Mn(2+). Asp287 (proton donor) is an active-site residue.

It belongs to the UbiD family. In terms of assembly, homohexamer. Requires prenylated FMN as cofactor. The cofactor is Mn(2+).

The protein resides in the cell membrane. It catalyses the reaction a 4-hydroxy-3-(all-trans-polyprenyl)benzoate + H(+) = a 2-(all-trans-polyprenyl)phenol + CO2. The protein operates within cofactor biosynthesis; ubiquinone biosynthesis. Catalyzes the decarboxylation of 3-octaprenyl-4-hydroxy benzoate to 2-octaprenylphenol, an intermediate step in ubiquinone biosynthesis. In Pseudomonas savastanoi pv. phaseolicola (strain 1448A / Race 6) (Pseudomonas syringae pv. phaseolicola (strain 1448A / Race 6)), this protein is 3-octaprenyl-4-hydroxybenzoate carboxy-lyase.